Here is a 465-residue protein sequence, read N- to C-terminus: Biotin biosynthesis bifunctional protein BioCD (465 aa).

The segment at 1-254 (MTPFLPDRSI…AYGQWRKPRG (254 aa)) is malonyl-ACP O-methyltransferase. Residues D234 and 263-268 (GVGKTL) each bind ATP. The segment at 255-465 (VFVTGTDTGV…DSLLSSNASR (211 aa)) is DTB synthetase. T267 is a Mg(2+) binding site. Residue K283 is part of the active site. Residue T287 coordinates substrate. Residues D295, 351-354 (EGAG), and 435-437 (PQL) contribute to the ATP site. D295 and E351 together coordinate Mg(2+).

In the N-terminal section; belongs to the methyltransferase superfamily. The protein in the C-terminal section; belongs to the dethiobiotin synthetase family. The cofactor is Mg(2+).

The protein localises to the cytoplasm. It carries out the reaction (7R,8S)-7,8-diammoniononanoate + CO2 + ATP = (4R,5S)-dethiobiotin + ADP + phosphate + 3 H(+). The enzyme catalyses malonyl-[ACP] + S-adenosyl-L-methionine = malonyl-[ACP] methyl ester + S-adenosyl-L-homocysteine. The protein operates within cofactor biosynthesis; biotin biosynthesis; biotin from 7,8-diaminononanoate: step 1/2. It participates in cofactor biosynthesis; biotin biosynthesis. Its function is as follows. Converts the free carboxyl group of a malonyl-thioester to its methyl ester by transfer of a methyl group from S-adenosyl-L-methionine (SAM). It allows synthesis of pimeloyl-ACP via the fatty acid synthetic pathway. Catalyzes a mechanistically unusual reaction, the ATP-dependent insertion of CO2 between the N7 and N8 nitrogen atoms of 7,8-diaminopelargonic acid (DAPA, also called 7,8-diammoniononanoate) to form a ureido ring. The sequence is that of Biotin biosynthesis bifunctional protein BioCD from Bordetella avium (strain 197N).